The following is a 294-amino-acid chain: Extracellular metalloprotease TRV_07111 (294 aa).

Positions 1–19 are cleaved as a signal peptide; the sequence is MRFSVVFAAIAALSSVVTA. Asn49, Asn54, and Asn74 each carry an N-linked (GlcNAc...) asparagine glycan. His185 lines the Zn(2+) pocket. Glu186 is a catalytic residue. His189 contacts Zn(2+). A disulfide bridge links Cys224 with Cys250.

It belongs to the peptidase M43B family.

It localises to the secreted. Secreted metalloproteinase that allows assimilation of proteinaceous substrates. Plays a pivotal role as a pathogenicity determinant during infections and contributes to the ability of the pathogen to persist within the mammalian host. The polypeptide is Extracellular metalloprotease TRV_07111 (Trichophyton verrucosum (strain HKI 0517)).